A 391-amino-acid polypeptide reads, in one-letter code: Sister chromatid cohesion protein DCC1 (391 aa).

It belongs to the DCC1 family. Component of the ctf18-RFC complex which consists of ctf18, ctf8, dscc1 and the RFC complex.

Its subcellular location is the nucleus. Loads pcna onto primed templates regulating velocity, spacing and restart activity of replication forks. May couple DNA replication to sister chromatid cohesion. This chain is Sister chromatid cohesion protein DCC1 (dscc1), found in Xenopus tropicalis (Western clawed frog).